The primary structure comprises 229 residues: UPF0488 protein C8orf33 (229 aa).

Over residues 1–16 (MAALGHLAGEAAAAPG) the composition is skewed to low complexity. Residues 1–96 (MAALGHLAGE…GEKASEKLAP (96 aa)) are disordered. Ala-2 is subject to N-acetylalanine. Arg-27 carries the post-translational modification Omega-N-methylarginine. Over residues 69–79 (KKQKNKKKTRN) the composition is skewed to basic residues. Ser-82 bears the Phosphoserine mark.

This sequence belongs to the UPF0488 family.

This Homo sapiens (Human) protein is UPF0488 protein C8orf33 (C8orf33).